Reading from the N-terminus, the 208-residue chain is ATP-dependent Clp protease proteolytic subunit (208 aa).

S105 acts as the Nucleophile in catalysis. H130 is an active-site residue.

The protein belongs to the peptidase S14 family. Fourteen ClpP subunits assemble into 2 heptameric rings which stack back to back to give a disk-like structure with a central cavity, resembling the structure of eukaryotic proteasomes.

It is found in the cytoplasm. The catalysed reaction is Hydrolysis of proteins to small peptides in the presence of ATP and magnesium. alpha-casein is the usual test substrate. In the absence of ATP, only oligopeptides shorter than five residues are hydrolyzed (such as succinyl-Leu-Tyr-|-NHMec, and Leu-Tyr-Leu-|-Tyr-Trp, in which cleavage of the -Tyr-|-Leu- and -Tyr-|-Trp bonds also occurs).. Cleaves peptides in various proteins in a process that requires ATP hydrolysis. Has a chymotrypsin-like activity. Plays a major role in the degradation of misfolded proteins. This Xanthomonas campestris pv. campestris (strain 8004) protein is ATP-dependent Clp protease proteolytic subunit.